Reading from the N-terminus, the 261-residue chain is Endonuclease NucS (261 aa).

It belongs to the NucS endonuclease family.

Its subcellular location is the cytoplasm. Its function is as follows. Cleaves both 3' and 5' ssDNA extremities of branched DNA structures. This Aeropyrum pernix (strain ATCC 700893 / DSM 11879 / JCM 9820 / NBRC 100138 / K1) protein is Endonuclease NucS.